A 345-amino-acid polypeptide reads, in one-letter code: Adenine deaminase (345 aa).

H20, H22, and H204 together coordinate Zn(2+). E207 serves as the catalytic Proton donor. D285 lines the Zn(2+) pocket. D286 is a substrate binding site.

It belongs to the metallo-dependent hydrolases superfamily. Adenosine and AMP deaminases family. Adenine deaminase type 2 subfamily. Requires Zn(2+) as cofactor.

It catalyses the reaction adenine + H2O + H(+) = hypoxanthine + NH4(+). Its function is as follows. Catalyzes the hydrolytic deamination of adenine to hypoxanthine. Plays an important role in the purine salvage pathway and in nitrogen catabolism. The polypeptide is Adenine deaminase (Ralstonia nicotianae (strain ATCC BAA-1114 / GMI1000) (Ralstonia solanacearum)).